The chain runs to 267 residues: 14-3-3-like protein GF14 chi (267 aa).

N-acetylalanine is present on Ala-2. Residues Ser-72 and Ser-195 each carry the phosphoserine modification. Thr-216 carries the post-translational modification Phosphothreonine. The residue at position 267 (Ser-267) is a Phosphoserine.

Belongs to the 14-3-3 family. In terms of assembly, interacts with TPK1. Interacts with the isocitrate dehydrogenase IDH3, and malate dehydrogenases MDH1 and MDH2. Interacts with DREB1A and DREB1B in the nucleus. Interacts with CINV1.

It localises to the nucleus. Its subcellular location is the cytoplasm. Its function is as follows. Is associated with a DNA binding complex that binds to the G box, a well-characterized cis-acting DNA regulatory element found in plant genes. Involved in the regulation of nutrient metabolism. This Arabidopsis thaliana (Mouse-ear cress) protein is 14-3-3-like protein GF14 chi (GRF1).